We begin with the raw amino-acid sequence, 71 residues long: Conotoxin Bu23 (71 aa).

The N-terminal stretch at 1–21 (MGMRMMVTVFLLGVLATTVVS) is a signal peptide. The propeptide occupies 22 to 37 (LRSNRASDGRRGIVNK). Asparagine 70 is modified (asparagine amide).

Belongs to the conotoxin A superfamily. Post-translationally, contains 3 disulfide bonds. They are not indicated here, since framework IV presents two different connectivities (I-V, II-III, IV-VI and I-III, II-V, IV-VI). As to expression, expressed by the venom duct.

It localises to the secreted. The protein is Conotoxin Bu23 of Conus bullatus (Bubble cone).